Reading from the N-terminus, the 206-residue chain is Small ribosomal subunit protein uS4 (206 aa).

Over residues 1–16 (MTKRQESKYKIDRRMG) the composition is skewed to basic and acidic residues. The interval 1–46 (MTKRQESKYKIDRRMGENIWGRPKSPVNRREYGPGQHGQRRKGKLS) is disordered. Positions 94 to 154 (RRLDAVVYRA…EKSKQLAIVL (61 aa)) constitute an S4 RNA-binding domain.

Belongs to the universal ribosomal protein uS4 family. As to quaternary structure, part of the 30S ribosomal subunit. Contacts protein S5. The interaction surface between S4 and S5 is involved in control of translational fidelity.

One of the primary rRNA binding proteins, it binds directly to 16S rRNA where it nucleates assembly of the body of the 30S subunit. Functionally, with S5 and S12 plays an important role in translational accuracy. The chain is Small ribosomal subunit protein uS4 from Parvibaculum lavamentivorans (strain DS-1 / DSM 13023 / NCIMB 13966).